Here is a 244-residue protein sequence, read N- to C-terminus: Ribosomal RNA small subunit methyltransferase G (244 aa).

S-adenosyl-L-methionine contacts are provided by residues glycine 84, phenylalanine 89, 107-109 (DST), 135-136 (AE), and arginine 154.

The protein belongs to the methyltransferase superfamily. RNA methyltransferase RsmG family.

It is found in the cytoplasm. Its function is as follows. Specifically methylates the N7 position of a guanine in 16S rRNA. In Nostoc punctiforme (strain ATCC 29133 / PCC 73102), this protein is Ribosomal RNA small subunit methyltransferase G.